We begin with the raw amino-acid sequence, 449 residues long: Glutamyl-tRNA(Gln) amidotransferase subunit A (449 aa).

Catalysis depends on charge relay system residues Lys-51 and Ser-126. Residues 103–128 (STTESSAHGKTLNPVDSSRVPGGSSG) are disordered. Positions 119–128 (SSRVPGGSSG) are enriched in low complexity. Ser-150 functions as the Acyl-ester intermediate in the catalytic mechanism.

Belongs to the amidase family. GatA subfamily. As to quaternary structure, heterotrimer of A, B and C subunits.

It carries out the reaction L-glutamyl-tRNA(Gln) + L-glutamine + ATP + H2O = L-glutaminyl-tRNA(Gln) + L-glutamate + ADP + phosphate + H(+). Functionally, allows the formation of correctly charged Gln-tRNA(Gln) through the transamidation of misacylated Glu-tRNA(Gln) in organisms which lack glutaminyl-tRNA synthetase. The reaction takes place in the presence of glutamine and ATP through an activated gamma-phospho-Glu-tRNA(Gln). The protein is Glutamyl-tRNA(Gln) amidotransferase subunit A of Wolinella succinogenes (strain ATCC 29543 / DSM 1740 / CCUG 13145 / JCM 31913 / LMG 7466 / NCTC 11488 / FDC 602W) (Vibrio succinogenes).